Here is a 521-residue protein sequence, read N- to C-terminus: GMP synthase [glutamine-hydrolyzing] (521 aa).

A Glutamine amidotransferase type-1 domain is found at 5–197; sequence KILILDFGSQ…VLDICGAQPG (193 aa). Residue C81 is the Nucleophile of the active site. Catalysis depends on residues H171 and E173. In terms of domain architecture, GMPS ATP-PPase spans 198–390; sequence WTMPNYIEEA…LGLPREMVYR (193 aa). ATP is bound at residue 225–231; sequence SGGVDSS.

Homodimer.

The enzyme catalyses XMP + L-glutamine + ATP + H2O = GMP + L-glutamate + AMP + diphosphate + 2 H(+). Its pathway is purine metabolism; GMP biosynthesis; GMP from XMP (L-Gln route): step 1/1. Catalyzes the synthesis of GMP from XMP. The sequence is that of GMP synthase [glutamine-hydrolyzing] from Neisseria meningitidis serogroup C (strain 053442).